The primary structure comprises 241 residues: ATP synthase subunit a (241 aa).

The next 5 helical transmembrane spans lie at 30 to 50 (GQVF…ISLG), 91 to 111 (FIGT…LIPW), 128 to 148 (INTT…AGLS), 193 to 213 (LVVG…VMFL), and 214 to 234 (GLFT…YYIG).

It belongs to the ATPase A chain family. F-type ATPases have 2 components, CF(1) - the catalytic core - and CF(0) - the membrane proton channel. CF(1) has five subunits: alpha(3), beta(3), gamma(1), delta(1), epsilon(1). CF(0) has four main subunits: a, b, b' and c.

Its subcellular location is the cellular thylakoid membrane. Key component of the proton channel; it plays a direct role in the translocation of protons across the membrane. This Prochlorococcus marinus (strain MIT 9215) protein is ATP synthase subunit a.